A 215-amino-acid chain; its full sequence is Leucyl/phenylalanyl-tRNA--protein transferase (215 aa).

This sequence belongs to the L/F-transferase family.

Its subcellular location is the cytoplasm. It catalyses the reaction N-terminal L-lysyl-[protein] + L-leucyl-tRNA(Leu) = N-terminal L-leucyl-L-lysyl-[protein] + tRNA(Leu) + H(+). The catalysed reaction is N-terminal L-arginyl-[protein] + L-leucyl-tRNA(Leu) = N-terminal L-leucyl-L-arginyl-[protein] + tRNA(Leu) + H(+). The enzyme catalyses L-phenylalanyl-tRNA(Phe) + an N-terminal L-alpha-aminoacyl-[protein] = an N-terminal L-phenylalanyl-L-alpha-aminoacyl-[protein] + tRNA(Phe). Functions in the N-end rule pathway of protein degradation where it conjugates Leu, Phe and, less efficiently, Met from aminoacyl-tRNAs to the N-termini of proteins containing an N-terminal arginine or lysine. The polypeptide is Leucyl/phenylalanyl-tRNA--protein transferase (Campylobacter jejuni subsp. jejuni serotype O:2 (strain ATCC 700819 / NCTC 11168)).